The primary structure comprises 376 residues: Thymidine kinase (376 aa).

The segment at 1–39 (MASYPCHQHASAFDQAARSRGHSNRRTALRPRRQQEATE) is disordered. The segment covering 19 to 32 (SRGHSNRRTALRPR) has biased composition (basic residues). 56–63 (GPHGMGKT) provides a ligand contact to ATP. Catalysis depends on glutamate 83, which acts as the Proton acceptor. Substrate contacts are provided by tyrosine 101 and glutamine 125. Arginine 216 contributes to the ATP binding site. Residue arginine 222 coordinates substrate.

The protein belongs to the herpesviridae thymidine kinase family. In terms of assembly, homodimer.

The enzyme catalyses thymidine + ATP = dTMP + ADP + H(+). In terms of biological role, catalyzes the transfer of the gamma-phospho group of ATP to thymidine to generate dTMP in the salvage pathway of pyrimidine synthesis. The dTMP serves as a substrate for DNA polymerase during viral DNA replication. Allows the virus to be reactivated and to grow in non-proliferative cells lacking a high concentration of phosphorylated nucleic acid precursors. The polypeptide is Thymidine kinase (Human herpesvirus 1 (strain CL101) (HHV-1)).